The following is a 378-amino-acid chain: Transcription factor YY2 (378 aa).

The tract at residues 39-113 (LETSVGQTIE…DNLLFSPEFG (75 aa)) is mediates transcriptional activation. A mediates transcriptional repression region spans residues 243–378 (EFTSMRPKKP…LTHVKNKNDQ (136 aa)). 4 C2H2-type zinc fingers span residues 260–284 (IACS…LHIH), 289–311 (HVCA…QLVH), 317–341 (YQCT…VRIH), and 347–371 (FVCP…ILTH).

Belongs to the YY transcription factor family. Weakly expressed by neuronal and glial cells in the cerebral cortex. Expressed by Purkinje cells and in the granular layers of the cerebellum. Expressed in all layers of spermatocytes in testis but not detected in sperm cells.

It is found in the nucleus. Functions as a multifunctional transcription factor that may exhibit positive and negative control on a large number of genes. May antagonize YY1 and function in development and differentiation. In Mus musculus (Mouse), this protein is Transcription factor YY2 (Yy2).